We begin with the raw amino-acid sequence, 127 residues long: Large ribosomal subunit protein uL22 (127 aa).

Belongs to the universal ribosomal protein uL22 family. In terms of assembly, part of the 50S ribosomal subunit.

Its function is as follows. This protein binds specifically to 23S rRNA; its binding is stimulated by other ribosomal proteins, e.g. L4, L17, and L20. It is important during the early stages of 50S assembly. It makes multiple contacts with different domains of the 23S rRNA in the assembled 50S subunit and ribosome. Functionally, the globular domain of the protein is located near the polypeptide exit tunnel on the outside of the subunit, while an extended beta-hairpin is found that lines the wall of the exit tunnel in the center of the 70S ribosome. The sequence is that of Large ribosomal subunit protein uL22 from Rhizorhabdus wittichii (strain DSM 6014 / CCUG 31198 / JCM 15750 / NBRC 105917 / EY 4224 / RW1) (Sphingomonas wittichii).